The primary structure comprises 134 residues: ATP synthase epsilon chain (134 aa).

The protein belongs to the ATPase epsilon chain family. F-type ATPases have 2 components, CF(1) - the catalytic core - and CF(0) - the membrane proton channel. CF(1) has five subunits: alpha(3), beta(3), gamma(1), delta(1), epsilon(1). CF(0) has three main subunits: a, b and c.

Its subcellular location is the cell membrane. Its function is as follows. Produces ATP from ADP in the presence of a proton gradient across the membrane. This chain is ATP synthase epsilon chain (atpC), found in Priestia megaterium (strain ATCC 12872 / QMB1551) (Bacillus megaterium).